A 503-amino-acid chain; its full sequence is MEAATEWLLENTPITKSECTTIRESVVDGDTGGYGVFVNFTKLRTLKGEKDSKFELLRIPRSATISMTSIRDILAKSTSENAVTASIKGHLTAFLSDENHHAFINETNLIVIYLVLKAILSDNKTYKLTGFASFYLNEVLLKTFVPLPCNTFQEDADKWNQYYKEYLNFPQQLFIEIINRFISARFLGMNYEKLISTVYCSVISRILEIPESSGEDTDDFFVSPTLVPLLDFVNHDNDHRNAHFDIDLRTNDIVLYLELDDIDSTVEEAQVFISYAPVEELVHFEQIYGFLPKSNNVQVWCYRFDEDFLSTYHYNGINVSHFYKCMRVRPSFQILILPSEVLINDCIVEFGELLILFSQHLQDPKKISFQLSETNDSYCSILKDKCGTETTKLLDKEECLEEFFGEHDEIENYEKTLKEFKSFLSKYITFRREKISSINLLSQNSSFTAFWQKEINLLDSLKGQFESKKEVMWYEKYGNDEKIKIPTVPFPPPSWIDYENMRV.

The SET domain occupies 52-276 (SKFELLRIPR…EEAQVFISYA (225 aa)). The SET-like stretch occupies residues 190–291 (NYEKLISTVY…VHFEQIYGFL (102 aa)).

Belongs to the class V-like SAM-binding methyltransferase superfamily.

Its subcellular location is the cytoplasm. The protein localises to the cytosol. The catalysed reaction is L-lysyl-[cytochrome c] + S-adenosyl-L-methionine = N(6)-methyl-L-lysyl-[cytochrome c] + S-adenosyl-L-homocysteine + H(+). In terms of biological role, methyltransferase which mediates trimethylation of cytochrome c (CYC1). In Kluyveromyces lactis (strain ATCC 8585 / CBS 2359 / DSM 70799 / NBRC 1267 / NRRL Y-1140 / WM37) (Yeast), this protein is Cytochrome c lysine N-methyltransferase 1 (CTM1).